The chain runs to 481 residues: Acyl-CoA ligase cnsG (481 aa).

A PTS2-type peroxisomal targeting signal motif is present at residues 3 to 11; sequence SPQLPPSMK. ATP contacts are provided by residues 124 to 132, 263 to 268, Asp-353, and Arg-368; these read KSGTTGNPK and NGYGMT. Thr-268 serves as a coordination point for substrate. CoA contacts are provided by residues 376–378 and 446–448; these read GGL and AIF. Lys-466 provides a ligand contact to ATP.

It belongs to the ATP-dependent AMP-binding enzyme family.

The protein operates within alkaloid biosynthesis. In terms of biological role, acyl-CoA ligase; part of the gene cluster that mediates the biosynthesis of communesins, a prominent class of indole alkaloids with great potential as pharmaceuticals. Communesins are biosynthesized by the coupling of tryptamine and aurantioclavine, two building blocks derived from L-tryptophan. The L-tryptophan decarboxylase cnsB converts L-tryptophan to tryptamine, whereas the tryptophan dimethylallyltransferase cnsF converts L-tryptophan to 4-dimethylallyl tryptophan which is further transformed to aurantioclavine by the aurantioclavine synthase cnsA, probably aided by the catalase cnsD. The cytochrome P450 monooxygenase cnsC catalyzes the heterodimeric coupling between the two different indole moieties, tryptamine and aurantioclavine, to construct vicinal quaternary stereocenters and yield the heptacyclic communesin scaffold. The O-methyltransferase cnsE then methylates the communesin scaffold to produce communesin K, the simplest characterized communesin that contains the heptacyclic core. The dioxygenase cnsJ converts communesin K into communesin I. Acylation to introduce the hexadienyl group at position N16 of communesin I by the acyltransferase cnsK leads to the production of communesin B. The hexadienyl group is produced by the highly reducing polyketide synthase cnsI, before being hydrolytically removed from cnsI by the serine hydrolase cnsH, converted into hexadienyl-CoA by the CoA ligase cnsG, and then transferred to communesin I by cnsK. Surprisingly, cnsK may also be a promiscuous acyltransferase that can tolerate a range of acyl groups, including acetyl-, propionyl-, and butyryl-CoA, which lead to communesins A, G and H respectively. The roles of the alpha-ketoglutarate-dependent dioxygenases cnsM and cnsP have still to be determined. In Penicillium expansum (Blue mold rot fungus), this protein is Acyl-CoA ligase cnsG.